We begin with the raw amino-acid sequence, 277 residues long: MNRIGCHLSTSKGLHKTIEQCLEINADTFQFFPRNPRGSKSRLIPKKEIDKFLELRKIHNINKIVCHGAYTMNLCSDREDLRKLAVKLINEDMKKIQDMRINHYVLHPGSHKNQGIEEGLKLIVEGINKVDVSNGQMICIETMSGKGSELGCDIDQIAYIINNASIPLYVCIDTCHLFSSGIRLDNFDDYLDEFDKKIGIDKIKVIHCNDSMMPFGANKDRHEKFGKGLIGEQDLFNVIFNERLKDRPIILETPNDLDGYKIEIEEIRRNFNELRQN.

The Zn(2+) site is built by His67, His107, Glu141, Asp173, His176, His207, Asp220, His222, and Glu252.

It belongs to the AP endonuclease 2 family. The cofactor is Zn(2+).

The catalysed reaction is Endonucleolytic cleavage to 5'-phosphooligonucleotide end-products.. Functionally, endonuclease IV plays a role in DNA repair. It cleaves phosphodiester bonds at apurinic or apyrimidinic (AP) sites, generating a 3'-hydroxyl group and a 5'-terminal sugar phosphate. The sequence is that of Probable endonuclease 4 from Finegoldia magna (strain ATCC 29328 / DSM 20472 / WAL 2508) (Peptostreptococcus magnus).